Reading from the N-terminus, the 129-residue chain is 3-aminoacrylate deaminase RutC (129 aa).

It belongs to the RutC family.

It catalyses the reaction (Z)-3-aminoacrylate + H2O + H(+) = 3-oxopropanoate + NH4(+). Involved in pyrimidine catabolism. Catalyzes the deamination of 3-aminoacrylate to malonic semialdehyde, a reaction that can also occur spontaneously. RutC may facilitate the reaction and modulate the metabolic fitness, rather than catalyzing essential functions. This Rhizobium rhizogenes (strain K84 / ATCC BAA-868) (Agrobacterium radiobacter) protein is 3-aminoacrylate deaminase RutC.